A 422-amino-acid polypeptide reads, in one-letter code: PHAF1 protein T01G9.2 (422 aa).

Belongs to the PHAF1 family.

It localises to the cytoplasm. The protein localises to the preautophagosomal structure. May play a regulatory role in autophagic activity. This chain is PHAF1 protein T01G9.2, found in Caenorhabditis elegans.